Reading from the N-terminus, the 338-residue chain is Inorganic pyrophosphatase (338 aa).

A diphosphate-binding site is contributed by arginine 129. 3 residues coordinate Mg(2+): aspartate 166, aspartate 171, and aspartate 203.

The protein belongs to the PPase family. Component of the NURF complex composed of Caf1-55, E(bx), Nurf-38 and Iswi. The cofactor is Mg(2+).

The protein resides in the cytoplasm. It localises to the nucleus. It carries out the reaction diphosphate + H2O = 2 phosphate + H(+). Component of NURF (nucleosome remodeling factor), a complex which catalyzes ATP-dependent nucleosome sliding and facilitates transcription of chromatin. NURF is required for homeotic gene expression, proper larval blood cell development, normal male X chromosome morphology, ecdysteroid signaling and metamorphosis. Inorganic pyrophosphatase (PPase), hydrolyzes inorganic pyrophosphate to inorganic phosphate, essential for driving critical biosynthetic reactions including transcription, replication, and DNA repair. The chain is Inorganic pyrophosphatase (Nurf-38) from Drosophila melanogaster (Fruit fly).